Reading from the N-terminus, the 80-residue chain is UPF0181 protein SG1330 (80 aa).

Residues 58 to 80 (TEVLETPAARAETDPYDSNPDDD) are disordered.

Belongs to the UPF0181 family.

The protein is UPF0181 protein SG1330 of Sodalis glossinidius (strain morsitans).